A 248-amino-acid polypeptide reads, in one-letter code: Kallikrein-12 (248 aa).

The first 17 residues, 1 to 17 (MGLSIFLLLCVLGLSQA), serve as a signal peptide directing secretion. A Peptidase S1 domain is found at 22 to 246 (IFNGTECGRN…YVDWIRMIMR (225 aa)). N24 is a glycosylation site (N-linked (GlcNAc...) asparagine). 6 disulfide bridges follow: C28/C161, C47/C63, C133/C235, C140/C206, C172/C186, and C196/C222. Active-site charge relay system residues include H62 and D108. N-linked (GlcNAc...) asparagine glycosylation occurs at N163. S200 serves as the catalytic Charge relay system.

Belongs to the peptidase S1 family. Kallikrein subfamily.

The protein localises to the secreted. In Homo sapiens (Human), this protein is Kallikrein-12 (KLK12).